The sequence spans 320 residues: NAC domain-containing protein 20 (320 aa).

The NAC domain occupies 14–170 (LPPGFRFHPT…DWAVCRIFHK (157 aa)). A DNA-binding region spans residues 114 to 176 (IGMKKTLVFY…IFHKSSGIKK (63 aa)).

In terms of assembly, forms homodimers. Forms heterodimers with NAC26. Expressed in developing seeds. Expressed in developing endosperm.

It localises to the nucleus. It is found in the endoplasmic reticulum. Transcription factor that acts redundantly with NAC26 to regulate the expression of genes involved in the biosynthesis of starch and storage proteins in grain. Directly binds to the promoters of starch synthase 1 (SS1), pullulanase (PUL), glutelin A1 (GLUA1), glutelins B4 and B5 (GLUB4 and GLUB5), alpha-globulin and 16 kDa prolamin, and activates their expression. This chain is NAC domain-containing protein 20, found in Oryza sativa subsp. japonica (Rice).